Consider the following 83-residue polypeptide: Small ribosomal subunit protein uS17 (83 aa).

Belongs to the universal ribosomal protein uS17 family. In terms of assembly, part of the 30S ribosomal subunit.

In terms of biological role, one of the primary rRNA binding proteins, it binds specifically to the 5'-end of 16S ribosomal RNA. The polypeptide is Small ribosomal subunit protein uS17 (Buchnera aphidicola subsp. Acyrthosiphon pisum (strain 5A)).